Consider the following 240-residue polypeptide: MSTNTKFIYHRILLKISGEVLQGVNKFGIDINSLKRIVKEIKLVLQFGIQVGLVIGSGNLFRGATLSQLGVNRIVSDHIGILSTIINSLAMKDIMNSYSIPSYVMSSIPVDGICETYNYERAIDLLSNNFVVIFAAGTGNPLFTTDSAACLRGIEIKSDIILKGTKVDGVYSKDPKKYSQAVFYKRLTYKDVIQKELKVMDLSAFSLARDHNLPIRVFNINKPKSLYRIVKGYDEGTLIK.

Residues 15–18, Gly58, and Arg62 contribute to the ATP site; that span reads KISG. UMP contacts are provided by residues Asp77 and 138–145; that span reads TGNPLFTT. Residues Thr165, Tyr171, and Asp174 each coordinate ATP.

This sequence belongs to the UMP kinase family. As to quaternary structure, homohexamer.

Its subcellular location is the cytoplasm. The catalysed reaction is UMP + ATP = UDP + ADP. Its pathway is pyrimidine metabolism; CTP biosynthesis via de novo pathway; UDP from UMP (UMPK route): step 1/1. With respect to regulation, inhibited by UTP. Its function is as follows. Catalyzes the reversible phosphorylation of UMP to UDP. In Buchnera aphidicola subsp. Schizaphis graminum (strain Sg), this protein is Uridylate kinase.